The following is a 726-amino-acid chain: MGKTNKNRIKTGISYRSLHLLISANETVKEKREAEQLPALDNDTQCLMSTGKVHILNADYSRYGVSVYDKLYGYSSSAASTIEEEDKGSGDGFKKRYMSLMQGSSQWKSRKLKQKKNAPKASAKAKAFLVRLHSEKRRHEVDFADINCLPEEIICRIIANLNDADSQRNCLLVSQEWSECAKRIIYKDVKFTSTYRVGQFVTTLRENPQYGKYVESLDLSQLKNGFINDESSTLENDVSQSSYGFEPPDIAYAGWRDWRYRKNSLYGSEMLSSIHRSRTRRSSDASSMNSSVFSHNYNRTRSSSVTSLVSRSTQTAAGSKNVVKRIRKLFSNSFRGKGQQKTHLHQNNGSGLSTLELKDEQFAAGTDSCSLRRSHLPFTNKFFLKYAHLRDLPLGYIIHLLTLCVNLKSINLSNLSLSPDFEIEELEYKRNGYVSFFPEETEEENLNGLNTFNGDRELTPKFFSDSDKPYHYYKDTQYESIIWKLDSSRDNNMFTNRRRSRKKFQLKILTNDDLCEAILSLKHMKHLNVGNVVWLMQRDMKRLIVHSMESCIIEDRCLDKIYMNFEGSGLQTNLPLAGQGLLKAMVLLQVITDMTNNCSDDQILEWFELRWIPTFRRVSQPADLVYLARACDQLHYVIQSEESPTYTRVGEVLITESHTGHYKYEISRNVNNVYLTIQIENGKPDTITDVKLKECSDRLLERVSNLRKNQLLQHTGENFFSTAGLA.

One can recognise an F-box domain in the interval 143-194; the sequence is FADINCLPEEIICRIIANLNDADSQRNCLLVSQEWSECAKRIIYKDVKFTST. The segment at 276–295 is disordered; sequence RSRTRRSSDASSMNSSVFSH. Residues 284-295 are compositionally biased toward low complexity; the sequence is DASSMNSSVFSH.

F-box protein probably involved in ubiquitin conjugation pathway. The chain is F-box protein COS111 (COS111) from Kluyveromyces lactis (strain ATCC 8585 / CBS 2359 / DSM 70799 / NBRC 1267 / NRRL Y-1140 / WM37) (Yeast).